The chain runs to 154 residues: Isotocin-neurophysin IT 1 (154 aa).

The N-terminal stretch at 1-20 is a signal peptide; sequence MSGSMFSVFSLLYLLSVCSA. Cys21 and Cys26 are disulfide-bonded. At Gly29 the chain carries Glycine amide. Disulfide bonds link Cys42–Cys86, Cys45–Cys59, Cys53–Cys76, Cys60–Cys66, Cys93–Cys105, Cys99–Cys117, and Cys106–Cys111.

Belongs to the vasopressin/oxytocin family.

Its function is as follows. Isotocin causes contraction of smooth muscles. The polypeptide is Isotocin-neurophysin IT 1 (Catostomus commersonii (White sucker)).